The chain runs to 194 residues: Large ribosomal subunit protein uL22 (194 aa).

This sequence belongs to the universal ribosomal protein uL22 family.

The protein is Large ribosomal subunit protein uL22 (rpl17) of Aspergillus fumigatus (strain ATCC MYA-4609 / CBS 101355 / FGSC A1100 / Af293) (Neosartorya fumigata).